Here is a 1231-residue protein sequence, read N- to C-terminus: Protein FAM193A (1231 aa).

Residues 106 to 142 (CTEDMYSTLLQRYQRSEEELRKVAEEWLECQKRIDAY) are a coiled coil. Residues 249 to 272 (DYLSEMRPPSVSSASSGSGSSSPI) form a disordered region. Residues 258-270 (SVSSASSGSGSSS) show a composition bias toward low complexity. Residue Ser293 is modified to Phosphoserine. Disordered stretches follow at residues 331–405 (NGGG…QAEQ), 633–703 (QSSS…APSF), 719–789 (SFCP…NQKE), 826–845 (LTKR…EREG), and 860–1174 (NSSE…SSLD). Acidic residues predominate over residues 355 to 365 (EADDEDADGES). Position 648 is a phosphoserine (Ser648). The segment covering 676-691 (LAPLPALSPSALSPAS) has biased composition (low complexity). The span at 761–773 (QQDDGDESADEDS) shows a compositional bias: acidic residues. The span at 776-785 (EHSSSTSTST) shows a compositional bias: low complexity. A compositionally biased stretch (basic residues) spans 872-881 (AAKRARHKQR). Positions 877–973 (RHKQRKLEEK…ATESISNSEN (97 aa)) form a coiled coil. Positions 882-909 (KLEEKARLEAEARAREHLHHQEEQKQRE) are enriched in basic and acidic residues. The segment covering 910-920 (EEEDEEEEDEE) has biased composition (acidic residues). Residues 921–935 (QHFKEEFQRLQELQK) show a composition bias toward basic and acidic residues. Basic residues predominate over residues 937–946 (RAAKKKKKDR). The span at 962-979 (QAATESISNSENIHNGSL) shows a compositional bias: polar residues. Ser1136 and Ser1151 each carry phosphoserine. Over residues 1156-1166 (GKNKKNKKKKG) the composition is skewed to basic residues.

It belongs to the FAM193 family.

This Mus musculus (Mouse) protein is Protein FAM193A (Fam193a).